The primary structure comprises 464 residues: Aspartyl protease AED1 (464 aa).

A signal peptide spans 1–25; that stretch reads MSIMRNFLSMIIMLCVCLNWCFAEG. A Peptidase A1 domain is found at 132–460; that stretch reads YIVTIGIGTP…DVAGGRVGFA (329 aa). Catalysis depends on residues D150 and D345. Residues C384 and C425 are joined by a disulfide bond.

It belongs to the peptidase A1 family.

It is found in the secreted. The protein resides in the extracellular space. The protein localises to the apoplast. Aspartyl protease involved in a homeostatic feedback mechanism regulating systemic immunity. Has only mild or no influence on local defenses. Acts downstream of salicylic acid to suppress systemic immunity. In Arabidopsis thaliana (Mouse-ear cress), this protein is Aspartyl protease AED1.